The primary structure comprises 324 residues: Biotin synthase (324 aa).

The Radical SAM core domain occupies 50–278; sequence HAGPAFTCAI…QADILVAGGR (229 aa). The [4Fe-4S] cluster site is built by Cys-67, Cys-71, and Cys-74. [2Fe-2S] cluster is bound by residues Cys-143 and Cys-203.

This sequence belongs to the radical SAM superfamily. Biotin synthase family. Homodimer. Requires [4Fe-4S] cluster as cofactor. [2Fe-2S] cluster is required as a cofactor.

It catalyses the reaction (4R,5S)-dethiobiotin + (sulfur carrier)-SH + 2 reduced [2Fe-2S]-[ferredoxin] + 2 S-adenosyl-L-methionine = (sulfur carrier)-H + biotin + 2 5'-deoxyadenosine + 2 L-methionine + 2 oxidized [2Fe-2S]-[ferredoxin]. It participates in cofactor biosynthesis; biotin biosynthesis; biotin from 7,8-diaminononanoate: step 2/2. Catalyzes the conversion of dethiobiotin (DTB) to biotin by the insertion of a sulfur atom into dethiobiotin via a radical-based mechanism. The sequence is that of Biotin synthase from Oleidesulfovibrio alaskensis (strain ATCC BAA-1058 / DSM 17464 / G20) (Desulfovibrio alaskensis).